Here is a 505-residue protein sequence, read N- to C-terminus: Neuronal acetylcholine receptor subunit alpha-3 (505 aa).

The N-terminal stretch at 1–31 (MGSGPLSLPLALSPPRLLLLLLLSLLPVARA) is a signal peptide. Residues 32 to 250 (SEAEHRLFER…PLFYTINLII (219 aa)) are Extracellular-facing. Asn55 and Asn172 each carry an N-linked (GlcNAc...) asparagine glycan. 2 disulfide bridges follow: Cys159–Cys173 and Cys223–Cys224. Residues 251–266 (PCLLISFLTVLVFYLP) form a helical membrane-spanning segment. Residues 267-268 (SD) lie on the Cytoplasmic side of the membrane. The helical transmembrane segment at 269 to 285 (CGEKVTLCISVLLSLTV) threads the bilayer. The Extracellular portion of the chain corresponds to 286–307 (FLLVITETIPSTSLVIPLIGEY). A helical transmembrane segment spans residues 308-326 (LLFTMIFVTLSIVITVFVL). Topologically, residues 327 to 474 (NVHYRTPTTH…QDDWKYVAMV (148 aa)) are cytoplasmic. Phosphoserine is present on residues Ser413 and Ser416. A helical transmembrane segment spans residues 475–493 (IDRIFLWVFTLVCILGTAG). Over 494 to 505 (LFLQPLMAREDA) the chain is Extracellular.

This sequence belongs to the ligand-gated ion channel (TC 1.A.9) family. Acetylcholine receptor (TC 1.A.9.1) subfamily. Alpha-3/CHRNA3 sub-subfamily. As to quaternary structure, neuronal AChR is composed of two different types of subunits: alpha and beta. CHRNA3/Alpha-3 subunit can be combined to CHRNA5/alpha-5, CHRNB2/beta-2 CHRNB3/beta-3 or CHRNB4/beta-4 to give rise to functional receptors. Forms stoichiometries such as (CHRNA3)2:(CHRNB4)3 or (CHRNA3:CHRNB4)2:CHRNB3. Part of a complex composed of STUB1/CHIP, VCP/p97, CHRNA3, and UBXN2A that modulates the ubiquitination and endoplasmic reticulum-associated degradation (ERAD) of CHRNA3. Within the complex UBXN2A acts as a scaffold protein required for the interaction of CHRNA3 with VCP/p97, this interaction also inhibits CHRNA3 ubiquitination by STUB1/CHIP and subsequently ERAD. Interacts with UBXN2A (via SEP domain), the interaction is required for the interaction of CHRNA3 in the STUB1:VCP:UBXN2A complex. Interacts with RIC3; which is required for proper folding and assembly. Interacts with LYPD6. In terms of processing, ubiquitinated; by STUB1/CHIP and thereafter degraded by the 26S proteosome complex.

The protein localises to the synaptic cell membrane. Its subcellular location is the cell membrane. The protein resides in the endoplasmic reticulum. It localises to the golgi apparatus. The enzyme catalyses Ca(2+)(in) = Ca(2+)(out). The catalysed reaction is K(+)(in) = K(+)(out). It catalyses the reaction Na(+)(in) = Na(+)(out). Activated by a myriad of ligands such as acetylcholine, cytisine, nicotine, choline and epibatidine. The heteropentamer CHRNA3:CHRNB2 activity is blocked by alpha-conotoxins ImI, ImII, PnIA, GID and MII. The heteropentamer CHRNA3:CHRNB4 activity is blocked by the alpha-conotoxin ImI and AuIB. Component of neuronal acetylcholine receptors (nAChRs) that function as pentameric, ligand-gated cation channels with high calcium permeability among other activities. nAChRs are excitatory neurotrasnmitter receptors formed by a collection of nAChR subunits known to mediate synaptic transmission in the nervous system and the neuromuscular junction. Each nAchR subunit confers differential attributes to channel properties, including activation, deactivation and desensitization kinetics, pH sensitivity, cation permeability, and binding to allosteric modulators. CHRNA3 forms heteropentameric neuronal acetylcholine receptors with CHRNB2 and CHRNB4, with CHRNA5, and CHRNB3 as accesory subunits. CHRNA3:CHRNB4 being predominant in neurons of the autonomic ganglia, it is known as ganglionic nicotinic receptor. CHRNA3:CHRNB4 or CHRNA3:CHRNA5:CHRNB4 play also an important role in the habenulo-interpeduncular tract, modulating the mesolimbic dopamine system and affecting reward circuits and addiction. Hypothalamic CHRNA3:CHRNB4 nAChR activation by nicotine leads to activation of POMC neurons and a decrease in food intake. Also expressed in the urothelium where it modulates reflex bladder activity by increasing intracellular calcium through extracellular influx and basal ATP release. The protein is Neuronal acetylcholine receptor subunit alpha-3 of Homo sapiens (Human).